The following is a 192-amino-acid chain: MVSVEELMGQVIDSEMEVISKELSKALEEALNLVKQKRDSVERTYTAKMQEMVTKAKEEIEGERARLDIEVKRAVLGEKNYWLNKVYEGTIKSLGTVKNSQGYKQGLESVLKRELRDGSIVYCSEDEVDQVQKMIKGLKAKAEVRSDPKIMGGVKIQYSDVGLVRDYSLNLILDQVFESLKPKIAEILFGEM.

This sequence belongs to the V-ATPase E subunit family. Has multiple subunits with at least A(3), B(3), C, D, E, F, H, I and proteolipid K(x).

The protein resides in the cell membrane. Component of the A-type ATP synthase that produces ATP from ADP in the presence of a proton gradient across the membrane. The sequence is that of A-type ATP synthase subunit E from Metallosphaera sedula (strain ATCC 51363 / DSM 5348 / JCM 9185 / NBRC 15509 / TH2).